Here is a 309-residue protein sequence, read N- to C-terminus: Coproporphyrin III ferrochelatase (309 aa).

Residues Tyr12, Arg29, 45–46 (RY), Ser53, and Tyr124 contribute to the Fe-coproporphyrin III site. Fe(2+) contacts are provided by His182 and Glu263.

Belongs to the ferrochelatase family.

The protein localises to the cytoplasm. It catalyses the reaction Fe-coproporphyrin III + 2 H(+) = coproporphyrin III + Fe(2+). Its pathway is porphyrin-containing compound metabolism; protoheme biosynthesis. Its function is as follows. Involved in coproporphyrin-dependent heme b biosynthesis. Catalyzes the insertion of ferrous iron into coproporphyrin III to form Fe-coproporphyrin III. The protein is Coproporphyrin III ferrochelatase of Listeria monocytogenes serotype 4b (strain F2365).